We begin with the raw amino-acid sequence, 860 residues long: MQKPELRRFEKLGEMMVQVYERYLPTAFDESMTLLEKMNKIIEYLNQIGRLTNDVVEEWNKVMEWILNDGLEDYVKETLEKWYEEGKFADLVIQVIDELKQFGVSVKTYGAVGDGKTDDIEAFEKAIASGYPVYIPNGKFAVSRSIKIPSNTVITGAGIDNAVVTFLDSVPLGDSLMINDNYATGNENIYLSDFTLDGNCQRFGVNAIGSGGSRDSNLSIHASKNVHINRIKSINATLHGIDITCGGLDYPYMGDGTTAPYPSRDIYISDCEAPSLGDDGITTNNSEYITISNCNCHDPRLLNNCNGIEIDDGSRHVQLSNNISKNCFGGVEVKAHGNVPAAYNVSINGHMSIGDVRSYNFRHIGHHSATDPESMSAKNIICNNLMSVNPNNKRGFQNNAAPRVLAVSAYYGVVVNGLSAYTTEPANLTETAISVQFRARNVSLSGIVMTGFSMAENAIYVIGGSRGGDSVNISNVTLNNSGRNGVAIGSGIDNVSISNVSAIGDGIANPIAIVKTVNSNPQISGVNGIGYPTVCQVAGVAYNDGLTLFNGAFRGATSSSEFIHSEGFVLGSTSKSGATASKSGVVSSSNSIAKAERSLIAGSASCTTSGSYNTILSSLNCETTDTGNLISTSSASKATGNRNIILASYGVLASGSYKVNGGYGGEGTPSASNIKLGNSLNGHIKAKNTVTGANTWSDYGEYFESVDGQAIETGYLVTLEGSKIRKAQEGEKIIGAISETAGIILGESTWNWQGQYLKNEFGGLIYETVEIDEGVFEKMPKINPSYNPKLEYLSRGERPEWNIVGLIGQIMVRIDDTVKIGSGISAKDGIATDGDTGIVMQITTPYESSKGYGVAKVLLK.

Residues glutamate 309 and aspartate 311 each contribute to the Mg(2+) site. Glutamate 701 functions as the Nucleophile in the catalytic mechanism. Residue 752-801 (WQGQYLKNEFGGLIYETVEIDEGVFEKMPKINPSYNPKLEYLSRGERPEW) participates in ATP binding.

Homotrimer. Each appendage is a homotrimer of gp12*. Mg(2+) is required as a cofactor. In terms of processing, autocleaved to produce the 74 kDa gp12* assembly attached to the phage particles. Autocleavage of the C-terminus is a posttrimerization event that is followed by an ATP-dependent release.

It is found in the virion. In terms of biological role, structural component of the 12 appendages that hang from the lower collar. Adhesion protein that binds to the host cell surface during virus attachment and mediates teichoic acids degradation. This is Pre-neck appendage protein (12) from Bacillus subtilis (Bacteriophage B103).